Consider the following 270-residue polypeptide: Probable ribosomal RNA small subunit methyltransferase A (270 aa).

Residues H19, L21, G46, E67, D92, and N107 each contribute to the S-adenosyl-L-methionine site.

Belongs to the class I-like SAM-binding methyltransferase superfamily. rRNA adenine N(6)-methyltransferase family. RsmA subfamily.

The protein resides in the cytoplasm. Its function is as follows. Specifically dimethylates two adjacent adenosines in the loop of a conserved hairpin near the 3'-end of 16S rRNA in the 30S particle. May play a critical role in biogenesis of 30S subunits. The protein is Probable ribosomal RNA small subunit methyltransferase A of Methanococcoides burtonii (strain DSM 6242 / NBRC 107633 / OCM 468 / ACE-M).